We begin with the raw amino-acid sequence, 370 residues long: Neutral protease 2 homolog AFUB_070680 (370 aa).

The N-terminal stretch at 1 to 19 (MKVTILASAILALINGALA) is a signal peptide. Residues 20–172 (LPANTPTLDV…PQAIKLLDRR (153 aa)) constitute a propeptide that is removed on maturation. Intrachain disulfides connect Cys178-Cys250 and Cys257-Cys275. Position 300 (His300) interacts with Zn(2+). Glu301 is a catalytic residue. Residues His304 and Asp315 each contribute to the Zn(2+) site.

Belongs to the peptidase M35 family. Zn(2+) serves as cofactor.

It is found in the secreted. It catalyses the reaction Preferential cleavage of bonds with hydrophobic residues in P1'. Also 3-Asn-|-Gln-4 and 8-Gly-|-Ser-9 bonds in insulin B chain.. In terms of biological role, secreted metalloproteinase that allows assimilation of proteinaceous substrates. Shows high activities on basic nuclear substrates such as histone and protamine. May be involved in virulence. This Aspergillus fumigatus (strain CBS 144.89 / FGSC A1163 / CEA10) (Neosartorya fumigata) protein is Neutral protease 2 homolog AFUB_070680.